The following is a 150-amino-acid chain: Large ribosomal subunit protein bL9 (150 aa).

It belongs to the bacterial ribosomal protein bL9 family.

Its function is as follows. Binds to the 23S rRNA. This is Large ribosomal subunit protein bL9 from Corynebacterium jeikeium (strain K411).